A 306-amino-acid chain; its full sequence is Proline-rich transmembrane protein 1 (306 aa).

The segment at M1–Q142 is disordered. Topologically, residues M1–Y223 are cytoplasmic. Over residues T15–A36 the composition is skewed to pro residues. Over residues S40–H49 the composition is skewed to basic residues. Composition is skewed to pro residues over residues H87–P111 and P121–P137. Residues M224–F244 traverse the membrane as a helical segment. The Extracellular portion of the chain corresponds to K245 to S275. The helical intramembrane region spans L276–A296. Topologically, residues A297–P306 are extracellular.

Belongs to the CD225/Dispanin family. In terms of assembly, component of the outer core of AMPAR complex. AMPAR complex consists of an inner core made of 4 pore-forming GluA/GRIA proteins (GRIA1, GRIA2, GRIA3 and GRIA4) and 4 major auxiliary subunits arranged in a twofold symmetry. One of the two pairs of distinct binding sites is occupied either by CNIH2, CNIH3 or CACNG2, CACNG3. The other harbors CACNG2, CACNG3, CACNG4, CACNG8 or GSG1L. This inner core of AMPAR complex is complemented by outer core constituents binding directly to the GluA/GRIA proteins at sites distinct from the interaction sites of the inner core constituents. Outer core constituents include at least PRRT1, PRRT2, CKAMP44/SHISA9, FRRS1L and NRN1. The proteins of the inner and outer core serve as a platform for other, more peripherally associated AMPAR constituents. Alone or in combination, these auxiliary subunits control the gating and pharmacology of the AMPAR complex and profoundly impact their biogenesis and protein processing.

It is found in the cell membrane. It localises to the synapse. Required to maintain a pool of extrasynaptic AMPA-regulated glutamate receptors (AMPAR) which is necessary for synapse development and function. Regulates basal AMPAR function and synaptic transmission during development but is dispensable at mature hippocampal synapses. Plays a role in regulating basal phosphorylation levels of glutamate receptor GRIA1 and promotes GRIA1 and GRIA2 cell surface expression. This chain is Proline-rich transmembrane protein 1, found in Homo sapiens (Human).